The primary structure comprises 178 residues: Large ribosomal subunit protein uL6 (178 aa).

It belongs to the universal ribosomal protein uL6 family. As to quaternary structure, part of the 50S ribosomal subunit.

Its function is as follows. This protein binds to the 23S rRNA, and is important in its secondary structure. It is located near the subunit interface in the base of the L7/L12 stalk, and near the tRNA binding site of the peptidyltransferase center. The polypeptide is Large ribosomal subunit protein uL6 (Leifsonia xyli subsp. xyli (strain CTCB07)).